A 379-amino-acid polypeptide reads, in one-letter code: Lipoyl synthase 2, mitochondrial (379 aa).

[4Fe-4S] cluster contacts are provided by cysteine 106, cysteine 111, cysteine 117, cysteine 137, cysteine 141, cysteine 144, and serine 352. The region spanning 122-341 (EHGTQTATIM…EERGNELGFL (220 aa)) is the Radical SAM core domain.

Belongs to the radical SAM superfamily. Lipoyl synthase family. Requires [4Fe-4S] cluster as cofactor.

The protein localises to the mitochondrion. The enzyme catalyses [[Fe-S] cluster scaffold protein carrying a second [4Fe-4S](2+) cluster] + N(6)-octanoyl-L-lysyl-[protein] + 2 oxidized [2Fe-2S]-[ferredoxin] + 2 S-adenosyl-L-methionine + 4 H(+) = [[Fe-S] cluster scaffold protein] + N(6)-[(R)-dihydrolipoyl]-L-lysyl-[protein] + 4 Fe(3+) + 2 hydrogen sulfide + 2 5'-deoxyadenosine + 2 L-methionine + 2 reduced [2Fe-2S]-[ferredoxin]. The protein operates within protein modification; protein lipoylation via endogenous pathway; protein N(6)-(lipoyl)lysine from octanoyl-[acyl-carrier-protein]: step 2/2. In terms of biological role, catalyzes the radical-mediated insertion of two sulfur atoms into the C-6 and C-8 positions of the octanoyl moiety bound to the lipoyl domains of lipoate-dependent enzymes, thereby converting the octanoylated domains into lipoylated derivatives. The chain is Lipoyl synthase 2, mitochondrial from Drosophila yakuba (Fruit fly).